Here is a 599-residue protein sequence, read N- to C-terminus: Elongation factor 4 (599 aa).

Residues 2–184 form the tr-type G domain; that stretch reads KNIRNFSIIA…RLVRDIPPPQ (183 aa). Residues 14 to 19 and 131 to 134 each bind GTP; these read DHGKST and NKID.

Belongs to the TRAFAC class translation factor GTPase superfamily. Classic translation factor GTPase family. LepA subfamily.

It is found in the cell inner membrane. The enzyme catalyses GTP + H2O = GDP + phosphate + H(+). In terms of biological role, required for accurate and efficient protein synthesis under certain stress conditions. May act as a fidelity factor of the translation reaction, by catalyzing a one-codon backward translocation of tRNAs on improperly translocated ribosomes. Back-translocation proceeds from a post-translocation (POST) complex to a pre-translocation (PRE) complex, thus giving elongation factor G a second chance to translocate the tRNAs correctly. Binds to ribosomes in a GTP-dependent manner. The polypeptide is Elongation factor 4 (Salmonella paratyphi C (strain RKS4594)).